We begin with the raw amino-acid sequence, 658 residues long: ATP-dependent zinc metalloprotease FtsH 4 (658 aa).

A disordered region spans residues 1-22 (MREPTNRQGSPGPGEPRPPAQG). The Cytoplasmic segment spans residues 1 to 28 (MREPTNRQGSPGPGEPRPPAQGRPRFPT). Residues 29–49 (WILWVALLALALWNVYTFFWP) traverse the membrane as a helical segment. Over 50-149 (SSGARLNIPY…TVKIDQAGGS (100 aa)) the chain is Extracellular. The segment at 95–114 (QVLSPGDPVPPGTSPNEIRT) is disordered. The chain crosses the membrane as a helical span at residues 150–170 (VWPSLLATIVPLFLFIGLMVY). At 171–658 (LGRSMSRGQQ…AAPAAAADSV (488 aa)) the chain is on the cytoplasmic side. Position 243–250 (243–250 (GPPGTGKT)) interacts with ATP. Position 464 (His-464) interacts with Zn(2+). Glu-465 is an active-site residue. Zn(2+)-binding residues include His-468 and Asp-540.

The protein in the central section; belongs to the AAA ATPase family. It in the C-terminal section; belongs to the peptidase M41 family. In terms of assembly, homohexamer. Zn(2+) is required as a cofactor.

The protein resides in the cell membrane. Its function is as follows. Acts as a processive, ATP-dependent zinc metallopeptidase for both cytoplasmic and membrane proteins. Plays a role in the quality control of integral membrane proteins. The chain is ATP-dependent zinc metalloprotease FtsH 4 (ftsh4) from Sphaerobacter thermophilus (strain ATCC 49802 / DSM 20745 / KCCM 41009 / NCIMB 13125 / S 6022).